Here is a 382-residue protein sequence, read N- to C-terminus: Lipid-A-disaccharide synthase (382 aa).

The protein belongs to the LpxB family.

The enzyme catalyses 2-N,3-O-bis[(3R)-3-hydroxytetradecanoyl]-alpha-D-glucosaminyl 1-phosphate + UDP-2-N,3-O-bis[(3R)-3-hydroxytetradecanoyl]-alpha-D-glucosamine = lipid A disaccharide (E. coli) + UDP + H(+). The catalysed reaction is a lipid X + a UDP-2-N,3-O-bis[(3R)-3-hydroxyacyl]-alpha-D-glucosamine = a lipid A disaccharide + UDP + H(+). Its pathway is glycolipid biosynthesis; lipid IV(A) biosynthesis; lipid IV(A) from (3R)-3-hydroxytetradecanoyl-[acyl-carrier-protein] and UDP-N-acetyl-alpha-D-glucosamine: step 5/6. In terms of biological role, condensation of UDP-2,3-diacylglucosamine and 2,3-diacylglucosamine-1-phosphate to form lipid A disaccharide, a precursor of lipid A, a phosphorylated glycolipid that anchors the lipopolysaccharide to the outer membrane of the cell. The polypeptide is Lipid-A-disaccharide synthase (Salmonella paratyphi B (strain ATCC BAA-1250 / SPB7)).